The sequence spans 133 residues: MGLENLKPAKGSVKKIKRVGRGQGSGMGKTATRGGKGQTARTGYKAKRGFEGGQQPLQRRLPKIGFRTKDSHIYSINVEKNEAIKSLEEITFSSLRALHHFPLYIEGVKLIGKDAKNLASKIKDERIKTSGQK.

The segment at 1–64 (MGLENLKPAK…QPLQRRLPKI (64 aa)) is disordered.

It belongs to the universal ribosomal protein uL15 family. Part of the 50S ribosomal subunit.

Its function is as follows. Binds to the 23S rRNA. This Helicobacter pylori (strain J99 / ATCC 700824) (Campylobacter pylori J99) protein is Large ribosomal subunit protein uL15.